The primary structure comprises 54 residues: Putative ATP synthase subunit epsilon, mitochondrial (54 aa).

Belongs to the eukaryotic ATPase epsilon family. F-type ATPases have 2 components, CF(1) - the catalytic core - and CF(0) - the membrane proton channel. CF(1) has five subunits: alpha(3), beta(3), gamma(1), delta(1), epsilon(1). CF(0) seems to have nine subunits: a, b, c, d, e, f, g, F6 and 8 (or A6L).

The protein resides in the mitochondrion. It is found in the mitochondrion inner membrane. Its function is as follows. Mitochondrial membrane ATP synthase (F(1)F(0) ATP synthase or Complex V) produces ATP from ADP in the presence of a proton gradient across the membrane which is generated by electron transport complexes of the respiratory chain. F-type ATPases consist of two structural domains, F(1) - containing the extramembraneous catalytic core, and F(0) - containing the membrane proton channel, linked together by a central stalk and a peripheral stalk. During catalysis, ATP synthesis in the catalytic domain of F(1) is coupled via a rotary mechanism of the central stalk subunits to proton translocation. Part of the complex F(1) domain and of the central stalk which is part of the complex rotary element. Rotation of the central stalk against the surrounding alpha(3)beta(3) subunits leads to hydrolysis of ATP in three separate catalytic sites on the beta subunits. This is Putative ATP synthase subunit epsilon, mitochondrial from Caenorhabditis elegans.